The following is a 755-amino-acid chain: 1,4-alpha-glucan branching enzyme GlgB (755 aa).

The active-site Nucleophile is D435. E488 serves as the catalytic Proton donor.

The protein belongs to the glycosyl hydrolase 13 family. GlgB subfamily. Monomer.

The catalysed reaction is Transfers a segment of a (1-&gt;4)-alpha-D-glucan chain to a primary hydroxy group in a similar glucan chain.. It functions in the pathway glycan biosynthesis; glycogen biosynthesis. Its function is as follows. Catalyzes the formation of the alpha-1,6-glucosidic linkages in glycogen by scission of a 1,4-alpha-linked oligosaccharide from growing alpha-1,4-glucan chains and the subsequent attachment of the oligosaccharide to the alpha-1,6 position. This is 1,4-alpha-glucan branching enzyme GlgB from Vibrio parahaemolyticus serotype O3:K6 (strain RIMD 2210633).